The primary structure comprises 501 residues: Solute carrier family 2, facilitated glucose transporter member 5 (501 aa).

At Met-1 the chain carries N-acetylmethionine. Topologically, residues 1-18 are cytoplasmic; that stretch reads MEQQDQSMKEGRLTLVLA. A helical transmembrane segment spans residues 19-39; the sequence is LATLIAAFGSSFQYGYNVAAV. Position 32 (Tyr-32) interacts with D-fructose. Residues 40–68 lie on the Extracellular side of the membrane; sequence NSPALLMQQFYNETYYGRTGEFMEDFPLT. A glycan (N-linked (GlcNAc...) asparagine) is linked at Asn-51. Residues 69-91 traverse the membrane as a helical segment; it reads LLWSVTVSMFPFGGFIGSLLVGP. Topologically, residues 92 to 98 are cytoplasmic; sequence LVNKFGR. The chain crosses the membrane as a helical span at residues 99 to 119; that stretch reads KGALLFNNIFSIVPAILMGCS. The Extracellular portion of the chain corresponds to 120-126; that stretch reads RVAKSFE. A helical membrane pass occupies residues 127–149; it reads LIIISRLLVGICAGVSSNVVPMY. The Cytoplasmic segment spans residues 150–161; it reads LGELAPKNLRGA. Residues 162–182 form a helical membrane-spanning segment; sequence LGVVPQLFITVGILVAQIFGL. Gln-167 contributes to the D-fructose binding site. Topologically, residues 183 to 192 are extracellular; the sequence is RNLLANVDGW. A helical membrane pass occupies residues 193–213; that stretch reads PILLGLTGVPAALQLVLLPFF. At 214 to 277 the chain is on the cytoplasmic side; sequence PESPRYLLIQ…LFRMRSLRWQ (64 aa). The chain crosses the membrane as a helical span at residues 278-298; the sequence is LLSIIVLMGGQQLSGVNAIYY. Residues Gln-288 and 296–298 contribute to the D-fructose site; that span reads IYY. Residues 299 to 313 are Extracellular-facing; it reads YADQIYLSAGVPKEH. The chain crosses the membrane as a helical span at residues 314–334; that stretch reads VQFVTAGTGAVNVVMTFCAVF. Over 335-342 the chain is Cytoplasmic; it reads VVELLGRR. A helical membrane pass occupies residues 343–363; it reads LLLLLGFSICLVACCVLTAAL. At 364–371 the chain is on the extracellular side; it reads ALQDTVSW. The chain crosses the membrane as a helical span at residues 372–394; it reads MPYISIVCVISYVIGHALGPSPI. Position 387 (His-387) interacts with D-fructose. Over 395 to 412 the chain is Cytoplasmic; that stretch reads PALLITEIFLQSSRPSAF. The helical transmembrane segment at 413 to 433 threads the bilayer; the sequence is MVGGSVHWLSNFTVGLIFPFI. Residue 419 to 420 coordinates D-fructose; it reads HW. Residues 434-439 are Extracellular-facing; that stretch reads QEGLGP. The chain crosses the membrane as a helical span at residues 440 to 460; the sequence is YSFIVFAVICLLTTIYIFLIV. At 461–501 the chain is on the cytoplasmic side; that stretch reads PETKAKTFIEINQIFTKMNKVSEVYPEKEELKELPPVTLEQ.

The protein belongs to the major facilitator superfamily. Sugar transporter (TC 2.A.1.1) family. Glucose transporter subfamily.

The protein resides in the apical cell membrane. Its subcellular location is the cell membrane. The protein localises to the sarcolemma. It catalyses the reaction D-fructose(out) = D-fructose(in). Functionally, functions as a fructose transporter that has only low activity with other monosaccharides. Can mediate the uptake of deoxyglucose, but with low efficiency. Essential for fructose uptake in the small intestine. Plays a role in the regulation of salt uptake and blood pressure in response to dietary fructose. Required for the development of high blood pressure in response to high dietary fructose intake. The chain is Solute carrier family 2, facilitated glucose transporter member 5 from Pongo abelii (Sumatran orangutan).